A 56-amino-acid polypeptide reads, in one-letter code: MDKKLLNIIACPICNKKLNFDLIRKELICEFDSVAFPIKDGIPILLRDSSYPIKKR.

Belongs to the UPF0434 family.

The protein is UPF0434 protein WIGBR2520 of Wigglesworthia glossinidia brevipalpis.